A 611-amino-acid chain; its full sequence is Virulence metalloprotease (611 aa).

Residues 1-25 form the signal peptide; it reads MKKVQRQMKWLFLAASISAALPVSA. A propeptide spanning residues 26–199 is cleaved from the precursor; it reads AKMVQVDDPS…VLQTWEGLNH (174 aa). Zn(2+) is bound at residue H346. The active site involves E347. Zn(2+) is bound by residues H350 and E370. Residue H429 is the Proton donor of the active site.

Belongs to the peptidase M4 family. Ca(2+) is required as a cofactor. The cofactor is Zn(2+). In terms of processing, seems to be more extensively processed.

It is found in the secreted. In terms of biological role, extracellular zinc metalloprotease involved in the virulence mechanism of V.anguillarum. The polypeptide is Virulence metalloprotease (empA) (Vibrio anguillarum (Listonella anguillarum)).